Reading from the N-terminus, the 830-residue chain is Prolactin receptor (830 aa).

The N-terminal stretch at 1–23 is a signal peptide; sequence MKQKLRSSVQIILLFALTAVGLT. Residues 24–439 lie on the Extracellular side of the membrane; that stretch reads GQSYPGKPKI…QIPTDFRIKD (416 aa). Fibronectin type-III domains lie at 30–128, 129–228, 231–331, and 333–434; these read KPKI…VQPD, APVN…IPNG, PPEK…IVQT, and PPVN…IPTD. A disulfide bond links cysteine 36 and cysteine 46. Asparagine 59 is a glycosylation site (N-linked (GlcNAc...) asparagine). The cysteines at positions 75 and 86 are disulfide-linked. N-linked (GlcNAc...) asparagine glycans are attached at residues asparagine 91, asparagine 100, asparagine 112, asparagine 132, asparagine 263, asparagine 304, asparagine 316, and asparagine 336. Zn(2+) is bound by residues aspartate 415 and histidine 417. A WSXWS motif motif is present at residues 420-424; that stretch reads WSEWS. The chain crosses the membrane as a helical span at residues 440–460; sequence MVVWIIVGVLSSLICLVMSWT. Over 461–830 the chain is Cytoplasmic; that stretch reads MVLKGYRMIA…DPSSFIPAFK (370 aa). The short motif at 472-480 is the Box 1 motif element; that stretch reads ILPPVPGPK.

It belongs to the type I cytokine receptor family. Type 1 subfamily.

The protein localises to the membrane. Functionally, this is a receptor for the anterior pituitary hormone prolactin. This is Prolactin receptor (PRLR) from Columba livia (Rock dove).